Reading from the N-terminus, the 226-residue chain is Late protein I226R (226 aa).

The N-terminal stretch at 1-16 (MKMETFLVCLFHNADG) is a signal peptide. N-linked (GlcNAc...) asparagine; by host glycans are attached at residues asparagine 142 and asparagine 164.

The protein belongs to the asfivirus I226R family.

Its function is as follows. Plays a role in the inhibition of host NF-kappa-B and IRF3 signaling pathways. Mechanistically, promotes the degradation of host IKBKG through enhancing its ubiquitination leading to inhibition of both pathways. The chain is Late protein I226R from Ornithodoros (relapsing fever ticks).